The following is a 175-amino-acid chain: Ribulose bisphosphate carboxylase small subunit, chloroplastic (175 aa).

The transit peptide at M1–R34 directs the protein to the chloroplast.

It belongs to the RuBisCO small chain family. Heterohexadecamer of 8 large and 8 small subunits.

Its subcellular location is the plastid. It is found in the chloroplast. Its function is as follows. RuBisCO catalyzes two reactions: the carboxylation of D-ribulose 1,5-bisphosphate, the primary event in carbon dioxide fixation, as well as the oxidative fragmentation of the pentose substrate. Both reactions occur simultaneously and in competition at the same active site. Although the small subunit is not catalytic it is essential for maximal activity. The sequence is that of Ribulose bisphosphate carboxylase small subunit, chloroplastic from Batophora oerstedii (Green alga).